Reading from the N-terminus, the 543-residue chain is NADH-ubiquinone oxidoreductase chain 4 (543 aa).

The next 14 membrane-spanning stretches (helical) occupy residues 5-25, 84-104, 129-149, 161-181, 182-202, 213-233, 254-274, 287-307, 321-341, 350-370, 377-397, 416-436, 456-476, and 501-521; these read FLMF…IIWS, VVAF…YILF, VDGI…IALM, SYLI…LVLD, ILLF…LIGL, FYIF…ILTM, IQIF…PTIF, PLGG…YGIF, YTYI…FSTL, IAYS…SNTI, ILLG…VGGV, MAPL…GVPL, LLGL…IFLF, and FYAL…PSII.

Belongs to the complex I subunit 4 family.

It is found in the mitochondrion membrane. It catalyses the reaction a ubiquinone + NADH + 5 H(+)(in) = a ubiquinol + NAD(+) + 4 H(+)(out). Its function is as follows. Core subunit of the mitochondrial membrane respiratory chain NADH dehydrogenase (Complex I) that is believed to belong to the minimal assembly required for catalysis. Complex I functions in the transfer of electrons from NADH to the respiratory chain. The immediate electron acceptor for the enzyme is believed to be ubiquinone. In Neurospora crassa (strain ATCC 24698 / 74-OR23-1A / CBS 708.71 / DSM 1257 / FGSC 987), this protein is NADH-ubiquinone oxidoreductase chain 4 (ndh-4).